The primary structure comprises 273 residues: Inositol monophosphatase 1 (273 aa).

The Mg(2+) site is built by E71, D91, V93, and D94. E71 is a substrate binding site. Substrate contacts are provided by residues 93 to 96 (VDGT), 194 to 196 (GSC), and D221. D221 is a binding site for Mg(2+).

This sequence belongs to the inositol monophosphatase superfamily. Requires Mg(2+) as cofactor. As to expression, expressed in seedlings, flowers, young and matures green fruits. Detected in roots and stems.

The catalysed reaction is a myo-inositol phosphate + H2O = myo-inositol + phosphate. It functions in the pathway polyol metabolism; myo-inositol biosynthesis; myo-inositol from D-glucose 6-phosphate: step 2/2. In terms of biological role, responsible for the provision of inositol required for synthesis of phosphatidylinositol and polyphosphoinositides. The chain is Inositol monophosphatase 1 (IMP1) from Solanum lycopersicum (Tomato).